A 61-amino-acid chain; its full sequence is Photosystem II reaction center protein Z (61 aa).

Helical transmembrane passes span 5 to 25 (LTAL…VALA) and 38 to 58 (NKAF…DGIS).

This sequence belongs to the PsbZ family. As to quaternary structure, PSII is composed of 1 copy each of membrane proteins PsbA, PsbB, PsbC, PsbD, PsbE, PsbF, PsbH, PsbI, PsbJ, PsbK, PsbL, PsbM, PsbT, PsbX, PsbY, PsbZ, Psb30/Ycf12, at least 3 peripheral proteins of the oxygen-evolving complex and a large number of cofactors. It forms dimeric complexes.

The protein resides in the plastid. Its subcellular location is the chloroplast thylakoid membrane. Functionally, may control the interaction of photosystem II (PSII) cores with the light-harvesting antenna, regulates electron flow through the 2 photosystem reaction centers. PSII is a light-driven water plastoquinone oxidoreductase, using light energy to abstract electrons from H(2)O, generating a proton gradient subsequently used for ATP formation. The chain is Photosystem II reaction center protein Z from Skeletonema costatum (Marine centric diatom).